Here is a 282-residue protein sequence, read N- to C-terminus: Putative hydrolase BamMC406_5393 (282 aa).

Mg(2+)-binding residues include Glu124, Glu126, and Asp155.

It belongs to the FAH family. Mg(2+) serves as cofactor.

The sequence is that of Putative hydrolase BamMC406_5393 from Burkholderia ambifaria (strain MC40-6).